A 239-amino-acid polypeptide reads, in one-letter code: Ribosomal RNA small subunit methyltransferase G (239 aa).

Residues Gly-78, Phe-83, 129–130 (AE), and Arg-148 contribute to the S-adenosyl-L-methionine site.

The protein belongs to the methyltransferase superfamily. RNA methyltransferase RsmG family.

It localises to the cytoplasm. Its function is as follows. Specifically methylates the N7 position of a guanine in 16S rRNA. This is Ribosomal RNA small subunit methyltransferase G from Clostridium botulinum (strain Okra / Type B1).